We begin with the raw amino-acid sequence, 240 residues long: 3-deoxy-D-manno-octulosonic acid kinase (240 aa).

Asp170 is a catalytic residue.

Belongs to the protein kinase superfamily. KdkA/RfaP family.

Its subcellular location is the cell inner membrane. It catalyses the reaction an alpha-Kdo-(2-&gt;6)-lipid IVA + ATP = a 4-O-phospho-alpha-Kdo-(2-&gt;6)-lipid IVA + ADP + H(+). Its pathway is bacterial outer membrane biogenesis; LPS core biosynthesis. Its function is as follows. Catalyzes the ATP-dependent phosphorylation of the 3-deoxy-D-manno-octulosonic acid (Kdo) residue in Kdo-lipid IV(A) at the 4-OH position. This chain is 3-deoxy-D-manno-octulosonic acid kinase, found in Mannheimia succiniciproducens (strain KCTC 0769BP / MBEL55E).